A 398-amino-acid chain; its full sequence is Succinate--CoA ligase [ADP-forming] subunit beta (398 aa).

Positions Lys-9–Glu-254 constitute an ATP-grasp domain. ATP is bound by residues Lys-46, Gly-53 to Gly-55, Glu-109, Ala-112, and Glu-117. 2 residues coordinate Mg(2+): Asn-209 and Asp-223. Substrate-binding positions include Asn-274 and Gly-331–Met-333.

The protein belongs to the succinate/malate CoA ligase beta subunit family. In terms of assembly, heterotetramer of two alpha and two beta subunits. Requires Mg(2+) as cofactor.

It carries out the reaction succinate + ATP + CoA = succinyl-CoA + ADP + phosphate. The enzyme catalyses GTP + succinate + CoA = succinyl-CoA + GDP + phosphate. The protein operates within carbohydrate metabolism; tricarboxylic acid cycle; succinate from succinyl-CoA (ligase route): step 1/1. Succinyl-CoA synthetase functions in the citric acid cycle (TCA), coupling the hydrolysis of succinyl-CoA to the synthesis of either ATP or GTP and thus represents the only step of substrate-level phosphorylation in the TCA. The beta subunit provides nucleotide specificity of the enzyme and binds the substrate succinate, while the binding sites for coenzyme A and phosphate are found in the alpha subunit. The sequence is that of Succinate--CoA ligase [ADP-forming] subunit beta from Rhizobium meliloti (strain 1021) (Ensifer meliloti).